Here is a 197-residue protein sequence, read N- to C-terminus: uncharacterized protein (197 aa).

This is an uncharacterized protein from Orgyia pseudotsugata multicapsid polyhedrosis virus (OpMNPV).